Here is a 205-residue protein sequence, read N- to C-terminus: uncharacterized protein (205 aa).

The region spanning 51 to 189 (ANVDAVAILA…KKGFAIDVRL (139 aa)) is the Nudix hydrolase domain. A Nudix box motif is present at residues 90–111 (GLVDSKESCEDAAIRELREETG).

This sequence belongs to the Nudix hydrolase family.

The protein localises to the cytoplasm. It is found in the nucleus. This is an uncharacterized protein from Schizosaccharomyces pombe (strain 972 / ATCC 24843) (Fission yeast).